The sequence spans 213 residues: Uracil phosphoribosyltransferase (213 aa).

Residues Arg78, Arg103, and 130–138 (DPMLATGGS) each bind 5-phospho-alpha-D-ribose 1-diphosphate. Uracil is bound by residues Ile197 and 202–204 (GDA). Residue Asp203 participates in 5-phospho-alpha-D-ribose 1-diphosphate binding.

This sequence belongs to the UPRTase family. Requires Mg(2+) as cofactor.

It carries out the reaction UMP + diphosphate = 5-phospho-alpha-D-ribose 1-diphosphate + uracil. It participates in pyrimidine metabolism; UMP biosynthesis via salvage pathway; UMP from uracil: step 1/1. Its activity is regulated as follows. Allosterically activated by GTP. Functionally, catalyzes the conversion of uracil and 5-phospho-alpha-D-ribose 1-diphosphate (PRPP) to UMP and diphosphate. The polypeptide is Uracil phosphoribosyltransferase (Cutibacterium acnes (strain DSM 16379 / KPA171202) (Propionibacterium acnes)).